The primary structure comprises 208 residues: Thiamine-phosphate synthase (208 aa).

4-amino-2-methyl-5-(diphosphooxymethyl)pyrimidine-binding positions include 37 to 39 (QVR) and N70. Residues D71 and D90 each contribute to the Mg(2+) site. T109 contacts 4-amino-2-methyl-5-(diphosphooxymethyl)pyrimidine. 135–137 (TTS) contacts 2-[(2R,5Z)-2-carboxy-4-methylthiazol-5(2H)-ylidene]ethyl phosphate. K138 contacts 4-amino-2-methyl-5-(diphosphooxymethyl)pyrimidine. 2-[(2R,5Z)-2-carboxy-4-methylthiazol-5(2H)-ylidene]ethyl phosphate is bound at residue G166.

Belongs to the thiamine-phosphate synthase family. Requires Mg(2+) as cofactor.

It carries out the reaction 2-[(2R,5Z)-2-carboxy-4-methylthiazol-5(2H)-ylidene]ethyl phosphate + 4-amino-2-methyl-5-(diphosphooxymethyl)pyrimidine + 2 H(+) = thiamine phosphate + CO2 + diphosphate. The catalysed reaction is 2-(2-carboxy-4-methylthiazol-5-yl)ethyl phosphate + 4-amino-2-methyl-5-(diphosphooxymethyl)pyrimidine + 2 H(+) = thiamine phosphate + CO2 + diphosphate. It catalyses the reaction 4-methyl-5-(2-phosphooxyethyl)-thiazole + 4-amino-2-methyl-5-(diphosphooxymethyl)pyrimidine + H(+) = thiamine phosphate + diphosphate. It functions in the pathway cofactor biosynthesis; thiamine diphosphate biosynthesis; thiamine phosphate from 4-amino-2-methyl-5-diphosphomethylpyrimidine and 4-methyl-5-(2-phosphoethyl)-thiazole: step 1/1. Its function is as follows. Condenses 4-methyl-5-(beta-hydroxyethyl)thiazole monophosphate (THZ-P) and 2-methyl-4-amino-5-hydroxymethyl pyrimidine pyrophosphate (HMP-PP) to form thiamine monophosphate (TMP). This chain is Thiamine-phosphate synthase, found in Salinispora arenicola (strain CNS-205).